The chain runs to 173 residues: Plasmolipin (173 aa).

At 1 to 34 the chain is on the cytoplasmic side; that stretch reads MADFPGKVSTQTSSQEPQRSFAISSSVDMGFIKS. The region spanning 31-160 is the MARVEL domain; the sequence is FIKSIPGILL…SSYFAYLGWR (130 aa). The helical transmembrane segment at 35 to 55 threads the bilayer; that stretch reads IPGILLIAEIVVGLLVWTLIA. The Extracellular portion of the chain corresponds to 56–67; that stretch reads STPHYLIPALGW. The helical transmembrane segment at 68–88 threads the bilayer; that stretch reads VLFVSITLWLLSIALLVILLL. Over 89–98 the chain is Cytoplasmic; sequence SLHQRLPSVP. Residues 99–119 traverse the membrane as a helical segment; it reads WPLVLLVFYSVAALLYLTAFL. Residues 120–138 lie on the Extracellular side of the membrane; that stretch reads ANAATVPGGYYQGHLGASA. A helical transmembrane segment spans residues 139-159; it reads FFGIVETLLYTASSYFAYLGW. The Cytoplasmic segment spans residues 160–173; the sequence is RGEGQNAAGSTVPV.

It belongs to the MAL family. In terms of assembly, forms oligomers. In terms of tissue distribution, expressed in the posterior midgut.

The protein resides in the cell membrane. It localises to the myelin membrane. Its subcellular location is the apical cell membrane. The protein localises to the recycling endosome membrane. It is found in the vesicle. Its function is as follows. Main component of the myelin sheath that plays an important role in myelin membrane biogenesis and myelination. Plays an essential function in apical endocytosis. Plays an important role by activating the Notch signaling pathway, which is essential for cell differentiation and results in correct patterning of the intestinal epithelium, particularly of the posterior gut absorptive cells. This chain is Plasmolipin (pllp), found in Danio rerio (Zebrafish).